The following is a 91-amino-acid chain: PqqA binding protein (91 aa).

The protein belongs to the PqqD family. As to quaternary structure, monomer. Interacts with PqqE.

It functions in the pathway cofactor biosynthesis; pyrroloquinoline quinone biosynthesis. Functions as a PqqA binding protein and presents PqqA to PqqE, in the pyrroloquinoline quinone (PQQ) biosynthetic pathway. The chain is PqqA binding protein from Pseudomonas fluorescens (strain Pf0-1).